The chain runs to 354 residues: Probable L-ascorbate-6-phosphate lactonase UlaG (354 aa).

It belongs to the UlaG family. Requires a divalent metal cation as cofactor.

It localises to the cytoplasm. The catalysed reaction is L-ascorbate 6-phosphate + H2O = 3-dehydro-L-gulonate 6-phosphate. Its pathway is cofactor degradation; L-ascorbate degradation; D-xylulose 5-phosphate from L-ascorbate: step 1/4. Probably catalyzes the hydrolysis of L-ascorbate-6-P into 3-keto-L-gulonate-6-P. Is essential for L-ascorbate utilization under anaerobic conditions. The polypeptide is Probable L-ascorbate-6-phosphate lactonase UlaG (Escherichia fergusonii (strain ATCC 35469 / DSM 13698 / CCUG 18766 / IAM 14443 / JCM 21226 / LMG 7866 / NBRC 102419 / NCTC 12128 / CDC 0568-73)).